Here is a 347-residue protein sequence, read N- to C-terminus: NADH-quinone oxidoreductase subunit H (347 aa).

9 helical membrane passes run 22-42 (GVVS…TAYL), 59-79 (PSLA…KLVF), 93-113 (FIIA…VIPI), 124-144 (IGGI…IIIA), 171-191 (MALS…IQIV), 198-218 (PIWL…SILA), 240-260 (VEYS…NMIL), 285-305 (IPGY…FLWI), and 321-341 (GLKV…AILV).

The protein belongs to the complex I subunit 1 family. In terms of assembly, NDH-1 is composed of 14 different subunits. Subunits NuoA, H, J, K, L, M, N constitute the membrane sector of the complex.

It localises to the cell inner membrane. The enzyme catalyses a quinone + NADH + 5 H(+)(in) = a quinol + NAD(+) + 4 H(+)(out). In terms of biological role, NDH-1 shuttles electrons from NADH, via FMN and iron-sulfur (Fe-S) centers, to quinones in the respiratory chain. The immediate electron acceptor for the enzyme in this species is believed to be ubiquinone. Couples the redox reaction to proton translocation (for every two electrons transferred, four hydrogen ions are translocated across the cytoplasmic membrane), and thus conserves the redox energy in a proton gradient. This subunit may bind ubiquinone. The sequence is that of NADH-quinone oxidoreductase subunit H from Orientia tsutsugamushi (strain Ikeda) (Rickettsia tsutsugamushi).